Consider the following 695-residue polypeptide: Translation initiation factor IF-2 (695 aa).

Residues 60–92 (KKSASSKKKTEKEVEEEEIETPKKKKKQEEKIP) form a disordered region. One can recognise a tr-type G domain in the interval 184–358 (QRPPVVTVMG…EMSEIKCIPT (175 aa)). Positions 193–200 (GHVDHGKT) are G1. 193–200 (GHVDHGKT) provides a ligand contact to GTP. The tract at residues 218-222 (GITQS) is G2. The segment at 239 to 242 (DTPG) is G3. GTP contacts are provided by residues 239-243 (DTPGH) and 293-296 (NKID). Residues 293–296 (NKID) are G4. The segment at 330–332 (SAK) is G5.

It belongs to the TRAFAC class translation factor GTPase superfamily. Classic translation factor GTPase family. IF-2 subfamily.

Its subcellular location is the cytoplasm. One of the essential components for the initiation of protein synthesis. Protects formylmethionyl-tRNA from spontaneous hydrolysis and promotes its binding to the 30S ribosomal subunits. Also involved in the hydrolysis of GTP during the formation of the 70S ribosomal complex. The polypeptide is Translation initiation factor IF-2 (Kosmotoga olearia (strain ATCC BAA-1733 / DSM 21960 / TBF 19.5.1)).